We begin with the raw amino-acid sequence, 154 residues long: Ribosome maturation factor RimP (154 aa).

This sequence belongs to the RimP family.

It localises to the cytoplasm. Its function is as follows. Required for maturation of 30S ribosomal subunits. The chain is Ribosome maturation factor RimP from Cyanothece sp. (strain PCC 7425 / ATCC 29141).